The following is a 95-amino-acid chain: Immunogenic miracidial antigen 8C (95 aa).

Polar residues predominate over residues 1–15; sequence EFTISFSSPVISTGQ. The segment at 1 to 95 is disordered; that stretch reads EFTISFSSPV…PKKYGSGHKY (95 aa). Positions 20–41 are enriched in acidic residues; sequence GDEDYHDGDDDVDYTDDVDDVD. Polar residues predominate over residues 45–59; the sequence is GSPSQLLQGGYQRNQ.

It belongs to the immunogenic miracidial antigen family.

The protein is Immunogenic miracidial antigen 8C (8C) of Schistosoma japonicum (Blood fluke).